Here is a 263-residue protein sequence, read N- to C-terminus: Tetraspanin-7 (263 aa).

Topologically, residues 1–7 (MVQCSNN) are cytoplasmic. Residues 8–28 (LLGILNFFTFLLSIPILSAGI) form a helical membrane-spanning segment. The Extracellular segment spans residues 29–45 (WLGKNAATECERFLDKP). Residues 46 to 66 (MVVLGIFLMFVSIAGLVGACC) form a helical membrane-spanning segment. At 67 to 75 (RVSCLLWLY) the chain is on the cytoplasmic side. A helical membrane pass occupies residues 76–96 (LFAMFLLILLGFCFTIFAFAV). Over 97-234 (TNRGAGEVIS…NIKNSWKKVA (138 aa)) the chain is Extracellular. An N-linked (GlcNAc...) asparagine glycan is attached at Asn-180. Residues 235–255 (KVNIVFLIFLIIVYSVGCCAF) traverse the membrane as a helical segment. Residues 256–263 (RNNRKRSW) lie on the Cytoplasmic side of the membrane.

This sequence belongs to the tetraspanin (TM4SF) family.

The protein localises to the membrane. In terms of biological role, may be involved in the regulation of cell differentiation. The polypeptide is Tetraspanin-7 (TET7) (Arabidopsis thaliana (Mouse-ear cress)).